The primary structure comprises 674 residues: DNA ligase (674 aa).

Residues 35–39 (DYDFD), 84–85 (SL), and E118 each bind NAD(+). The active-site N6-AMP-lysine intermediate is the K120. Residues R141, E184, K297, and K321 each contribute to the NAD(+) site. Zn(2+) is bound by residues C415, C418, C433, and C439. The region spanning 598 to 674 (LVNTNFEGLT…ITEDEFDALL (77 aa)) is the BRCT domain.

Belongs to the NAD-dependent DNA ligase family. LigA subfamily. The cofactor is Mg(2+). Mn(2+) serves as cofactor.

The catalysed reaction is NAD(+) + (deoxyribonucleotide)n-3'-hydroxyl + 5'-phospho-(deoxyribonucleotide)m = (deoxyribonucleotide)n+m + AMP + beta-nicotinamide D-nucleotide.. DNA ligase that catalyzes the formation of phosphodiester linkages between 5'-phosphoryl and 3'-hydroxyl groups in double-stranded DNA using NAD as a coenzyme and as the energy source for the reaction. It is essential for DNA replication and repair of damaged DNA. The protein is DNA ligase of Chlorobium phaeovibrioides (strain DSM 265 / 1930) (Prosthecochloris vibrioformis (strain DSM 265)).